A 134-amino-acid chain; its full sequence is Cytochrome b5 (134 aa).

The Cytochrome b5 heme-binding domain maps to lysine 5 to aspartate 81. Heme is bound by residues histidine 40 and histidine 64. Residues phenylalanine 107–valine 127 traverse the membrane as a helical segment.

The protein belongs to the cytochrome b5 family.

It localises to the endoplasmic reticulum membrane. The protein localises to the microsome membrane. Its function is as follows. Membrane bound hemoprotein which function as an electron carrier for several membrane bound oxygenases. In Brassica oleracea var. botrytis (Cauliflower), this protein is Cytochrome b5 (CYB5).